The primary structure comprises 50 residues: Light-harvesting protein B-870 beta chain (50 aa).

Residues 2 to 22 (ADNTDLSFTGLTDEQAQELHS) lie on the Cytoplasmic side of the membrane. Histidine 21 and histidine 39 together coordinate a bacteriochlorophyll. A helical transmembrane segment spans residues 23–45 (VYMSGLFLFAAVAVVAHLATYIW). At 46-50 (RPWFG) the chain is on the periplasmic side.

This sequence belongs to the antenna complex beta subunit family. In terms of assembly, the core complex is formed by different alpha and beta chains, binding bacteriochlorophyll molecules, and arranged most probably in tetrameric structures disposed around the reaction center. The non-pigmented gamma chains may constitute additional components.

It is found in the cell inner membrane. Its function is as follows. Antenna complexes are light-harvesting systems, which transfer the excitation energy to the reaction centers. In Roseobacter denitrificans (strain ATCC 33942 / OCh 114) (Erythrobacter sp. (strain OCh 114)), this protein is Light-harvesting protein B-870 beta chain (pufB).